A 210-amino-acid chain; its full sequence is dTTP/UTP pyrophosphatase (210 aa).

Residue D80 is the Proton acceptor of the active site.

It belongs to the Maf family. YhdE subfamily. The cofactor is a divalent metal cation.

The protein resides in the cytoplasm. It catalyses the reaction dTTP + H2O = dTMP + diphosphate + H(+). It carries out the reaction UTP + H2O = UMP + diphosphate + H(+). Functionally, nucleoside triphosphate pyrophosphatase that hydrolyzes dTTP and UTP. May have a dual role in cell division arrest and in preventing the incorporation of modified nucleotides into cellular nucleic acids. The protein is dTTP/UTP pyrophosphatase of Nitratidesulfovibrio vulgaris (strain ATCC 29579 / DSM 644 / CCUG 34227 / NCIMB 8303 / VKM B-1760 / Hildenborough) (Desulfovibrio vulgaris).